A 437-amino-acid chain; its full sequence is Endoplasmic reticulum protein SC65 (437 aa).

The first 18 residues, 1 to 18, serve as a signal peptide directing secretion; the sequence is MARVAWGLLWLLLGSAGA. An N-linked (GlcNAc...) asparagine glycan is attached at N361. Composition is skewed to acidic residues over residues 381–413 and 428–437; these read DEME…EEGM and AEAEPEPELA. Residues 381 to 437 form a disordered region; the sequence is DEMELEETEPPLEPEDALSDAEFEGEGDYEEGMYADWWQEPDAKGDEAEAEPEPELA.

The protein belongs to the leprecan family. Interacts with PLOD1, P3H3 and PPIB. Identified in a complex with PLOD1 and P3H3. Detected in fibroblasts (at protein level). Detected in spleen, prostate, testis, ovary, colon, pancreas, kidney, placenta and heart.

It localises to the endoplasmic reticulum. Functionally, part of a complex composed of PLOD1, P3H3 and P3H4 that catalyzes hydroxylation of lysine residues in collagen alpha chains and is required for normal assembly and cross-linking of collagen fibrils. Required for normal bone density and normal skin stability via its role in hydroxylation of lysine residues in collagen alpha chains and in collagen fibril assembly. The polypeptide is Endoplasmic reticulum protein SC65 (Homo sapiens (Human)).